Here is a 629-residue protein sequence, read N- to C-terminus: Dapper homolog 3 (629 aa).

Serine 6 carries the phosphoserine modification. Disordered regions lie at residues 50–76 and 105–574; these read PGMG…RRAA and GGLE…GGLV. Residues 56–69 are compositionally biased toward acidic residues; that stretch reads EAEDEEDADEDEDA. The stretch at 63–87 forms a coiled coil; the sequence is ADEDEDAAAARRAAAALEEQLEALP. The span at 105-150 shows a compositional bias: low complexity; it reads GGLEQESGRSSGFYEDPSSTGGPDSPPSTFCGDSGFSGSSSYGRLG. Serine 165 and serine 239 each carry phosphoserine. Arginine 258 is modified (omega-N-methylarginine). Residues 301-311 are compositionally biased toward basic and acidic residues; the sequence is PAREPSLERVG. The span at 316–335 shows a compositional bias: low complexity; the sequence is SPAALSRAWASSWESEAAPE. Pro residues predominate over residues 336-348; that stretch reads PAAPPAAPSPPDS. Residues serine 426 and serine 478 each carry the phosphoserine modification. Low complexity predominate over residues 525 to 535; it reads SAGRLGPLGRR. Over residues 536–546 the composition is skewed to gly residues; sequence GPAGGVGGGYG. Residues 547 to 568 are compositionally biased toward low complexity; it reads ESESSASEGESPAFSSASSDSD. The short motif at 626 to 629 is the PDZ-binding element; that stretch reads MTTV.

Belongs to the dapper family. As to quaternary structure, can form homodimers and heterodimers with DACT1 or DACT3. Interacts with CSNK1D, PKA catalytic subunit, PKC-type kinase, DVL1, DVL3, VANGL1, VANGL2 and CTNND1. Interacts with DVL2.

In terms of biological role, may be involved in regulation of intracellular signaling pathways during development. Specifically thought to play a role in canonical and/or non-canonical Wnt signaling pathways through interaction with DSH (Dishevelled) family proteins. This is Dapper homolog 3 (DACT3) from Homo sapiens (Human).